The following is a 456-amino-acid chain: Argininosuccinate lyase (456 aa).

The protein belongs to the lyase 1 family. Argininosuccinate lyase subfamily.

It is found in the cytoplasm. The catalysed reaction is 2-(N(omega)-L-arginino)succinate = fumarate + L-arginine. The protein operates within amino-acid biosynthesis; L-arginine biosynthesis; L-arginine from L-ornithine and carbamoyl phosphate: step 3/3. The protein is Argininosuccinate lyase of Carboxydothermus hydrogenoformans (strain ATCC BAA-161 / DSM 6008 / Z-2901).